The primary structure comprises 384 residues: Oxoeicosanoid receptor 1 (384 aa).

The tract at residues 1–21 (MELHNLSSPSPSLSSSVLPPS) is disordered. Residues 1–58 (MELHNLSSPSPSLSSSVLPPSFSPSPSSAPSAFTTVGGSSGGPCHPTSSSLVSAFLAP) lie on the Extracellular side of the membrane. Asn-5 carries an N-linked (GlcNAc...) asparagine glycan. Residues 7-21 (SSPSPSLSSSVLPPS) are compositionally biased toward low complexity. A helical transmembrane segment spans residues 59–79 (ILALEFVLGLVGNSLALFIFC). The Cytoplasmic portion of the chain corresponds to 80–87 (IHTRPWTS). A helical transmembrane segment spans residues 88-108 (NTVFLVSLVAADFLLISNLPL). The Extracellular segment spans residues 109–129 (RVDYYLLHETWRFGAAACKVN). An intrachain disulfide couples Cys-126 to Cys-198. A helical membrane pass occupies residues 130–152 (LFMLSTNRTASVVFLTAIALNRY). The Cytoplasmic segment spans residues 153-172 (LKVVQPHHVLSRASVGAAAR). The helical transmembrane segment at 173 to 193 (VAGGLWVGILLLNGHLLLSTF) threads the bilayer. At 194 to 215 (SGPSCLSYRVGTKPSASLRWHQ) the chain is on the extracellular side. A helical transmembrane segment spans residues 216–236 (ALYLLEFFLPLALILFAIVSI). The Cytoplasmic segment spans residues 237–256 (GLTIRNRGLGGQAGPQRAMR). Residues 257-277 (VLAMVVAVYTICFLPSIIFGM) traverse the membrane as a helical segment. At 278–297 (ASMVAFWLSACRSLDLCTQL) the chain is on the extracellular side. Residues 298-318 (FHGSLAFTYLNSVLDPVLYCF) form a helical membrane-spanning segment. The Cytoplasmic segment spans residues 319–384 (SSPNFLHQSR…SLEKEGSSQG (66 aa)).

This sequence belongs to the G-protein coupled receptor 1 family. In terms of tissue distribution, expressed in various tissues except brain. Expression is more intense in liver, kidney, peripheral leukocyte, lung, and spleen than in other tissues. Highly expressed in eosinophils, neutrophils, and lung macrophages.

Its subcellular location is the membrane. In terms of biological role, receptor for eicosanoids and polyunsaturated fatty acids such as 5-oxo-6E,8Z,11Z,14Z-eicosatetraenoic acid (5-OXO-ETE), 5(S)-hydroperoxy-6E,8Z,11Z,14Z-eicosatetraenoic acid (5(S)-HPETE) and arachidonic acid. Seems to be coupled to the G(i)/G(o), families of heteromeric G proteins. This chain is Oxoeicosanoid receptor 1 (OXER1), found in Homo sapiens (Human).